The sequence spans 522 residues: L-tyrosine/L-DOPA decarboxylase 2 (522 aa).

2 repeat units span residues 75-132 (KDVH…TELE) and 135-186 (VMDW…GREH). Positions 75-186 (KDVHDDIVPG…RILDRIGREH (112 aa)) are 2 X approximate tandem repeats. Residues T163, C164, T258, and N312 each contribute to the pyridoxal 5'-phosphate site. K315 is modified (N6-(pyridoxal phosphate)lysine).

It belongs to the group II decarboxylase family. Pyridoxal 5'-phosphate is required as a cofactor. As to expression, strongly expressed in all tissues, particularly in thick roots.

It carries out the reaction L-tyrosine + H(+) = tyramine + CO2. It catalyses the reaction L-dopa + H(+) = dopamine + CO2. Its pathway is aromatic compound metabolism. It participates in alkaloid biosynthesis. Functionally, aromatic amino acid decarboxylase participating in the biosynthesis of natural products derived from phenylethylamine, including mescaline, a natural hallucinogen potentially used in psychotherapeutic treatments. Catalyzes the decarboxylation of L-tyrosine and L-DOPA. The sequence is that of L-tyrosine/L-DOPA decarboxylase 2 from Lophophora williamsii (Peyote).